A 552-amino-acid polypeptide reads, in one-letter code: Putative transport protein YPTS_4123 (552 aa).

Transmembrane regions (helical) follow at residues 1 to 21 (MSAIALTVSMLALVAVLGLWI), 26 to 46 (IYGVGLGIGGVLFGGIIVGHF), 65 to 85 (FGLILFVYTIGIQVGPGFFSS), 96 to 116 (FAILMVVVGGLVTAIIHKLFA), 119 to 139 (LPIILGVFSGAVTNTPALGAA), and 158 to 178 (MGYAMAYPFGICGILLVMWLI). RCK C-terminal domains are found at residues 192-276 (AFDS…VVGE) and 279-361 (DVTL…IVGN). Helical transmembrane passes span 371–391 (MLPVFIGVGLGVLLGSIPLFV), 393–413 (GFPAALRLGLAGGPLVVALIL), 439–459 (IVLFLSVVGLKSGGDFINTLV), 464–484 (LAWIGYGAMITGIPLLTVGIL), 493–513 (YLTLCGMLAGSMTDPPALAFA), and 530–550 (VYPLAMFLRIMSPQILAVLFW).

This sequence belongs to the AAE transporter (TC 2.A.81) family. YidE subfamily.

Its subcellular location is the cell membrane. The protein is Putative transport protein YPTS_4123 of Yersinia pseudotuberculosis serotype IB (strain PB1/+).